A 324-amino-acid chain; its full sequence is Lipoyl synthase (324 aa).

Cys-71, Cys-76, Cys-82, Cys-97, Cys-101, Cys-104, and Ser-311 together coordinate [4Fe-4S] cluster. Positions 83–300 (FGHGTATFLI…GDKAREMGFT (218 aa)) constitute a Radical SAM core domain.

Belongs to the radical SAM superfamily. Lipoyl synthase family. Requires [4Fe-4S] cluster as cofactor.

It localises to the cytoplasm. The catalysed reaction is [[Fe-S] cluster scaffold protein carrying a second [4Fe-4S](2+) cluster] + N(6)-octanoyl-L-lysyl-[protein] + 2 oxidized [2Fe-2S]-[ferredoxin] + 2 S-adenosyl-L-methionine + 4 H(+) = [[Fe-S] cluster scaffold protein] + N(6)-[(R)-dihydrolipoyl]-L-lysyl-[protein] + 4 Fe(3+) + 2 hydrogen sulfide + 2 5'-deoxyadenosine + 2 L-methionine + 2 reduced [2Fe-2S]-[ferredoxin]. The protein operates within protein modification; protein lipoylation via endogenous pathway; protein N(6)-(lipoyl)lysine from octanoyl-[acyl-carrier-protein]: step 2/2. Catalyzes the radical-mediated insertion of two sulfur atoms into the C-6 and C-8 positions of the octanoyl moiety bound to the lipoyl domains of lipoate-dependent enzymes, thereby converting the octanoylated domains into lipoylated derivatives. This Nitrosococcus oceani (strain ATCC 19707 / BCRC 17464 / JCM 30415 / NCIMB 11848 / C-107) protein is Lipoyl synthase.